The primary structure comprises 874 residues: Alanine--tRNA ligase (874 aa).

His562, His566, Cys665, and His669 together coordinate Zn(2+).

The protein belongs to the class-II aminoacyl-tRNA synthetase family. It depends on Zn(2+) as a cofactor.

Its subcellular location is the cytoplasm. It catalyses the reaction tRNA(Ala) + L-alanine + ATP = L-alanyl-tRNA(Ala) + AMP + diphosphate. In terms of biological role, catalyzes the attachment of alanine to tRNA(Ala) in a two-step reaction: alanine is first activated by ATP to form Ala-AMP and then transferred to the acceptor end of tRNA(Ala). Also edits incorrectly charged Ser-tRNA(Ala) and Gly-tRNA(Ala) via its editing domain. This Pseudomonas putida (strain ATCC 47054 / DSM 6125 / CFBP 8728 / NCIMB 11950 / KT2440) protein is Alanine--tRNA ligase.